A 361-amino-acid chain; its full sequence is Large ribosomal subunit protein uL3 (361 aa).

The tract at residues 339–361 is disordered; the sequence is RPPKKKPPVQRPQITYVSVESKQ. Residues 350–361 show a composition bias toward polar residues; sequence PQITYVSVESKQ.

Belongs to the universal ribosomal protein uL3 family. As to quaternary structure, part of the 50S ribosomal subunit. Forms a cluster with proteins L14 and L24e.

In terms of biological role, one of the primary rRNA binding proteins, it binds directly near the 3'-end of the 23S rRNA, where it nucleates assembly of the 50S subunit. This is Large ribosomal subunit protein uL3 from Pyrococcus abyssi (strain GE5 / Orsay).